Here is an 821-residue protein sequence, read N- to C-terminus: Fibroblast growth factor receptor 2 (821 aa).

The first 21 residues, 1-21 (MVSWGRFICLVVVTMATLSLA), serve as a signal peptide directing secretion. The Extracellular portion of the chain corresponds to 22–377 (RPSFSLVEDT…EITASPDYLE (356 aa)). Residues 25–125 (FSLVEDTTLE…ETWYFMVNVT (101 aa)) enclose the Ig-like C2-type 1 domain. Residues cysteine 62 and cysteine 107 are joined by a disulfide bond. Asparagine 83 and asparagine 123 each carry an N-linked (GlcNAc...) asparagine glycan. Acidic residues predominate over residues 131–144 (GDDEDDTDGAEDFV). The disordered stretch occupies residues 131–151 (GDDEDDTDGAEDFVSENSNNK). Ig-like C2-type domains lie at 154–247 (PYWT…YHLD) and 256–358 (PILQ…AWLT). Residues 161 to 178 (KMEKRLHAVPAANTVKFR) form a heparin-binding region. The cysteines at positions 179 and 231 are disulfide-linked. N-linked (GlcNAc...) asparagine glycans are attached at residues asparagine 228, asparagine 241, asparagine 265, asparagine 297, asparagine 318, and asparagine 331. A disulfide bridge connects residues cysteine 278 and cysteine 342. Residues 378-398 (IAIYCIGVFLIACMVVTVILC) form a helical membrane-spanning segment. The Cytoplasmic portion of the chain corresponds to 399–821 (RMKNTTKKPD…YPHINGSVKT (423 aa)). Residue tyrosine 466 is modified to Phosphotyrosine; by autocatalysis. Positions 481–770 (LTLGKPLGEG…LTLTTNEEYL (290 aa)) constitute a Protein kinase domain. ATP contacts are provided by residues 487 to 495 (LGEGCFGQV), lysine 517, 565 to 567 (EYA), and asparagine 571. Phosphotyrosine; by autocatalysis is present on residues tyrosine 586 and tyrosine 588. Aspartate 626 functions as the Proton acceptor in the catalytic mechanism. Residues tyrosine 656, tyrosine 657, and tyrosine 769 each carry the phosphotyrosine; by autocatalysis modification. Serine 780 carries the post-translational modification Phosphoserine.

The protein belongs to the protein kinase superfamily. Tyr protein kinase family. Fibroblast growth factor receptor subfamily. As to quaternary structure, monomer. Homodimer after ligand binding. Interacts predominantly with FGF1 and FGF2, but can also interact with FGF3, FGF4, FGF6, FGF7, FGF8, FGF9, FGF10, FGF17, FGF18 and FGF22 (in vitro). Ligand specificity is determined by tissue-specific expression of isoforms, and differences in the third Ig-like domain are crucial for ligand specificity. Isoform 1 has high affinity for FGF1 and FGF2, but low affinity for FGF7. Isoform 3 has high affinity for FGF1 and FGF7, and has much higher affinity for FGF7 than isoform 1 (in vitro). Affinity for fibroblast growth factors (FGFs) is increased by heparan sulfate glycosaminoglycans that function as coreceptors. Likewise, KLB increases the affinity for FGF19 and FGF21. Interacts with PLCG1, GRB2 and PAK4. Interacts with FLRT2. In terms of processing, autophosphorylated. Binding of FGF family members together with heparan sulfate proteoglycan or heparin promotes receptor dimerization and autophosphorylation on several tyrosine residues. Autophosphorylation occurs in trans between the two FGFR molecules present in the dimer. Phosphorylation at Tyr-769 is essential for interaction with PLCG1. Post-translationally, N-glycosylated in the endoplasmic reticulum. The N-glycan chains undergo further maturation to an Endo H-resistant form in the Golgi apparatus. Ubiquitinated. FGFR2 is rapidly ubiquitinated after autophosphorylation, leading to internalization and degradation. Subject to degradation both in lysosomes and by the proteasome.

The protein localises to the cell membrane. Its subcellular location is the golgi apparatus. The protein resides in the cytoplasmic vesicle. It is found in the secreted. The catalysed reaction is L-tyrosyl-[protein] + ATP = O-phospho-L-tyrosyl-[protein] + ADP + H(+). With respect to regulation, present in an inactive conformation in the absence of bound ligand. Ligand binding leads to dimerization and activation by autophosphorylation on tyrosine residues. Inhibited by ARQ 523 and ARQ 069; these compounds maintain the kinase in an inactive conformation and inhibit autophosphorylation. Functionally, tyrosine-protein kinase that acts as a cell-surface receptor for fibroblast growth factors and plays an essential role in the regulation of cell proliferation, differentiation, migration and apoptosis, and in the regulation of embryonic development. Required for normal embryonic patterning, trophoblast function, limb bud development, lung morphogenesis, osteogenesis and skin development. Plays an essential role in the regulation of osteoblast differentiation, proliferation and apoptosis, and is required for normal skeleton development. Promotes cell proliferation in keratinocytes and immature osteoblasts, but promotes apoptosis in differentiated osteoblasts. Phosphorylates PLCG1, FRS2 and PAK4. Ligand binding leads to the activation of several signaling cascades. Activation of PLCG1 leads to the production of the cellular signaling molecules diacylglycerol and inositol 1,4,5-trisphosphate. Phosphorylation of FRS2 triggers recruitment of GRB2, GAB1, PIK3R1 and SOS1, and mediates activation of RAS, MAPK1/ERK2, MAPK3/ERK1 and the MAP kinase signaling pathway, as well as of the AKT1 signaling pathway. FGFR2 signaling is down-regulated by ubiquitination, internalization and degradation. Mutations that lead to constitutive kinase activation or impair normal FGFR2 maturation, internalization and degradation lead to aberrant signaling. Over-expressed FGFR2 promotes activation of STAT1. The polypeptide is Fibroblast growth factor receptor 2 (FGFR2) (Homo sapiens (Human)).